The chain runs to 308 residues: Glutaminase (308 aa).

Substrate is bound by residues Ser-66, Asn-117, Glu-161, Asn-168, Tyr-192, Tyr-244, and Val-262.

This sequence belongs to the glutaminase family. As to quaternary structure, homotetramer.

It carries out the reaction L-glutamine + H2O = L-glutamate + NH4(+). The sequence is that of Glutaminase from Salmonella choleraesuis (strain SC-B67).